Here is a 224-residue protein sequence, read N- to C-terminus: Putative gastrointestinal growth factor xP4 (224 aa).

A signal peptide spans 1–17; it reads MANSVFWAIAVALVLGA. 4 consecutive P-type domains span residues 25 to 68, 73 to 117, 123 to 167, and 173 to 216; these read YRCG…YTPW, TICN…YQPI, RDCS…FKPE, and LQCA…FYPD. Intrachain disulfides connect Cys-27/Cys-53, Cys-37/Cys-52, Cys-47/Cys-64, Cys-75/Cys-102, Cys-86/Cys-101, Cys-96/Cys-113, Cys-125/Cys-152, Cys-136/Cys-151, Cys-146/Cys-163, Cys-175/Cys-201, Cys-185/Cys-200, and Cys-195/Cys-212. Asn-104 carries an N-linked (GlcNAc...) asparagine glycan.

In terms of processing, glycosylated. As to expression, stomach mucosa.

The protein resides in the secreted. May act as a growth factor. The sequence is that of Putative gastrointestinal growth factor xP4 (p4) from Xenopus laevis (African clawed frog).